Consider the following 641-residue polypeptide: MIKISFFDNQIQEFISGTTPLAIWKEHLSEHFKKPVAALFNNQPIELDFPLKKNGNLEILTESDPKSLEVLNHSTAHLMAQAVARLYPDALFTVGPAIKEGFYYDIDFQKHTISEKDFLTIEKVMHQISLENHKITREEISFEKAKKLFAYNPYKQVLLEKFRDQTISIYRQGEFFDLCRGVHVIKTNLIKHFKILKISGAYFQGDAKNKTLTRIYGTSFFKKQALADYLQLLEERKERDHKKINKELDLFMFNKEVGLGLPFWLPKGATVRRIVERYIVDKELSYDYHHVYTPIMANTELYRISGHLDHYASNMFPIMSLENGEKLVLRPMNCPHHMMIYKKNPHSYKELPLRIAELGMMHRFEKSGAVSGLQRVREMTLNDAHIFARPDQIKEEIKKIINLILEVYCDFNIKNYELRLSYRNPNNTEKYFNDDQMWYNAEKTLKETIKELGLPFKEAIGEAAFYGPKLDVQVFNALGNEETLSTVQLDFLLPQKFDLTFIGEDNKHHRPVVIHRAVVSTMERFLAHLVEETKGVFPLWLAPVQVLLIPVSAPLHFEFSQKIKETLQLQNFRVEINSKDNTLGYKIREAQKLKIPYQVVIGDHEMINNLITFRKYGSHLQTTIKVDEFVSLLKDKVLQKK.

Positions 1 to 61 (MIKISFFDNQ…KKNGNLEILT (61 aa)) constitute a TGS domain. Positions 240 to 538 (DHKKINKELD…LVEETKGVFP (299 aa)) are catalytic. Zn(2+) is bound by residues C334, H385, and H515.

It belongs to the class-II aminoacyl-tRNA synthetase family. In terms of assembly, homodimer. Requires Zn(2+) as cofactor.

The protein resides in the cytoplasm. The catalysed reaction is tRNA(Thr) + L-threonine + ATP = L-threonyl-tRNA(Thr) + AMP + diphosphate + H(+). Its function is as follows. Catalyzes the attachment of threonine to tRNA(Thr) in a two-step reaction: L-threonine is first activated by ATP to form Thr-AMP and then transferred to the acceptor end of tRNA(Thr). Also edits incorrectly charged L-seryl-tRNA(Thr). This chain is Threonine--tRNA ligase, found in Aster yellows witches'-broom phytoplasma (strain AYWB).